Reading from the N-terminus, the 282-residue chain is MSDRGENGQARIVTVGNVRFGNDLPFVLIAGPCQIESRAHAEGVAAELHAICARLDIPLVFKASYDKANRTSVGGARGVGMERGLDILAGIRERFDIPVLTDIHDIGQCKPAAEAVDILQIPAFLCRQTDLLLAAGETGRTINVKKGQFLAPWDMRNVAAKIASTGNHNLLLTERGASFGYNTLVTDFRALPIMAQTGYPVVFDATHSVQQPGGQGTASGGDRTFAPILARAALAVGVASVFIECHPDPDRAPSDGPNMIPLDQMEETLRRLKQFDVLGKAG.

It belongs to the KdsA family.

It localises to the cytoplasm. The enzyme catalyses D-arabinose 5-phosphate + phosphoenolpyruvate + H2O = 3-deoxy-alpha-D-manno-2-octulosonate-8-phosphate + phosphate. It functions in the pathway carbohydrate biosynthesis; 3-deoxy-D-manno-octulosonate biosynthesis; 3-deoxy-D-manno-octulosonate from D-ribulose 5-phosphate: step 2/3. It participates in bacterial outer membrane biogenesis; lipopolysaccharide biosynthesis. The sequence is that of 2-dehydro-3-deoxyphosphooctonate aldolase from Granulibacter bethesdensis (strain ATCC BAA-1260 / CGDNIH1).